Reading from the N-terminus, the 297-residue chain is MSPKDLTIPTGADGEGSVQVHLDEADKITGAKVFAVYGKGGIGKSTTSSNLSAAFSILGKRVLQIGCDPKHDSTFTLTGSLVPTVIDVLKDVDFHPEELRPEDFVFEGFNGVMCVEAGGPPAGTGCGGYVVGQTVKLLKQHHLLDDTDVVIFDVLGDVVCGGFAAPLQHADQAVVVTANDFDSIYAMNRIIAAVQAKSKNYKVRLAGCVANRSRATDEVDRFCKETNFRRLAHMPDLDAIRRSRLKKKTLFEMDEDQDVLAARAEYIRLAESLWRGLDPIDPHSLPDRDIFELLGFD.

Residues 41–46 (GIGKST) and K70 contribute to the ATP site. Mg(2+) is bound at residue S45. Positions 126 and 160 each coordinate [4Fe-4S] cluster. ATP contacts are provided by residues 211–212 (NR) and 235–237 (PDL).

It belongs to the NifH/BchL/ChlL family. In terms of assembly, homodimer. Protochlorophyllide reductase is composed of three subunits; BchL, BchN and BchB. [4Fe-4S] cluster serves as cofactor.

It carries out the reaction chlorophyllide a + oxidized 2[4Fe-4S]-[ferredoxin] + 2 ADP + 2 phosphate = protochlorophyllide a + reduced 2[4Fe-4S]-[ferredoxin] + 2 ATP + 2 H2O. The protein operates within porphyrin-containing compound metabolism; bacteriochlorophyll biosynthesis (light-independent). Functionally, component of the dark-operative protochlorophyllide reductase (DPOR) that uses Mg-ATP and reduced ferredoxin to reduce ring D of protochlorophyllide (Pchlide) to form chlorophyllide a (Chlide). This reaction is light-independent. The L component serves as a unique electron donor to the NB-component of the complex, and binds Mg-ATP. In Cereibacter sphaeroides (strain KD131 / KCTC 12085) (Rhodobacter sphaeroides), this protein is Light-independent protochlorophyllide reductase iron-sulfur ATP-binding protein.